Reading from the N-terminus, the 398-residue chain is Stearoyl-[acyl-carrier-protein] 9-desaturase, chloroplastic (398 aa).

Residues 1 to 34 (MALKLNPLASQPYNFPSSARPPISTFRSPKFLCL) constitute a chloroplast transit peptide. 6 residues coordinate Fe cation: glutamate 140, glutamate 178, histidine 181, glutamate 231, glutamate 264, and histidine 267.

This sequence belongs to the fatty acid desaturase type 2 family. Homodimer. Fe(2+) is required as a cofactor.

It localises to the plastid. The protein resides in the chloroplast. The enzyme catalyses octadecanoyl-[ACP] + 2 reduced [2Fe-2S]-[ferredoxin] + O2 + 2 H(+) = (9Z)-octadecenoyl-[ACP] + 2 oxidized [2Fe-2S]-[ferredoxin] + 2 H2O. The protein operates within lipid metabolism; fatty acid metabolism. Functionally, converts stearoyl-ACP to oleoyl-ACP by introduction of a cis double bond between carbons 9 and 10 of the acyl chain. In Brassica napus (Rape), this protein is Stearoyl-[acyl-carrier-protein] 9-desaturase, chloroplastic.